Consider the following 912-residue polypeptide: Protein transport protein SEC24-2 (912 aa).

Basic residues predominate over residues 1 to 11 (MSNPSRPKKRV). Disordered regions lie at residues 1–83 (MSNP…QQIS) and 102–129 (PNAYYQPNNGNNIQPTGENKPSLTPGRP). Composition is skewed to polar residues over residues 33–45 (SGQTMQSQVSGSA), 53–74 (GQFTQPMNASDAQNQPQFMTPA), and 106–129 (YQPNNGNNIQPTGENKPSLTPGRP). Zn(2+) contacts are provided by cysteine 226, cysteine 229, cysteine 248, and cysteine 251. A zinc finger-like region spans residues 226–251 (CRRCRGYLNPFVKILQVESKWRCNFC).

The protein belongs to the SEC23/SEC24 family. SEC24 subfamily. The COPII coat is composed of at least 5 proteins: the SEC23/24 complex, the SEC13/31 complex, and the protein SAR1. Golgi apparatus membrane; Peripheral membrane protein; Cytoplasmic side.

The protein localises to the cytoplasm. The protein resides in the cytoplasmic vesicle. It localises to the COPII-coated vesicle membrane. It is found in the endoplasmic reticulum membrane. Its subcellular location is the golgi apparatus membrane. Functionally, component of the coat protein complex II (COPII) which promotes the formation of transport vesicles from the endoplasmic reticulum (ER). The coat has two main functions, the physical deformation of the endoplasmic reticulum membrane into vesicles and the selection of cargo molecules. This is Protein transport protein SEC24-2 (SEC242) from Naumovozyma castellii (Yeast).